Consider the following 380-residue polypeptide: Probable transposase for insertion sequence element IS701 (380 aa).

Functionally, involved in the transposition of the insertion sequence. The protein is Probable transposase for insertion sequence element IS701 of Microchaete diplosiphon (Fremyella diplosiphon).